Reading from the N-terminus, the 561-residue chain is Carboxylesterase patB (561 aa).

Residues 1–19 (MQIINWASLLLVTWETVVA) form the signal peptide. N-linked (GlcNAc...) asparagine glycans are attached at residues Asn-38, Asn-69, and Asn-109. Residue Ser-263 is the Acyl-ester intermediate of the active site. Residue Ser-263 coordinates substrate. A glycan (N-linked (GlcNAc...) asparagine) is linked at Asn-316. The active-site Charge relay system is Glu-385. N-linked (GlcNAc...) asparagine glycans are attached at residues Asn-393, Asn-412, Asn-429, and Asn-496.

The protein belongs to the type-B carboxylesterase/lipase family.

Its subcellular location is the cytoplasm. It is found in the cytosol. The catalysed reaction is a carboxylic ester + H2O = an alcohol + a carboxylate + H(+). It participates in mycotoxin biosynthesis; patulin biosynthesis. Functionally, carboxylesterase; part of the gene cluster that mediates the biosynthesis of patulin, an acetate-derived tetraketide mycotoxin produced by several fungal species that shows antimicrobial properties against several bacteria. The function of patB in patulin synthesis has still to be characterized. The pathway begins with the synthesis of 6-methylsalicylic acid by the polyketide synthase (PKS) patK via condensation of acetate and malonate units. The 6-methylsalicylic acid decarboxylase patG then catalyzes the decarboxylation of 6-methylsalicylic acid to yield m-cresol (also known as 3-methylphenol). These first reactions occur in the cytosol. The intermediate m-cresol is then transported into the endoplasmic reticulum where the cytochrome P450 monooxygenase patH converts it to m-hydroxybenzyl alcohol, which is further converted to gentisyl alcohol by the cytochrome P450 monooxygenase patI. The oxidoreductases patJ and patO further convert gentisyl alcohol to isoepoxydon in the vacuole. PatN catalyzes then the transformation of isoepoxydon into phyllostine. The cluster protein patF is responsible for the conversion from phyllostine to neopatulin whereas the alcohol dehydrogenase patD converts neopatulin to E-ascladiol. The steps between isoepoxydon and E-ascladiol occur in the cytosol, and E-ascladiol is probably secreted to the extracellular space by one of the cluster-specific transporters patC or patM. Finally, the secreted patulin synthase patE catalyzes the conversion of E-ascladiol to patulin. The chain is Carboxylesterase patB from Penicillium expansum (Blue mold rot fungus).